The primary structure comprises 923 residues: Neuropilin-1a (923 aa).

Residues 1–19 (MHCGLVLILFTGIFLIVSA) form the signal peptide. Residues 20–856 (LKNDKCGDNI…AGNMLKTLDP (837 aa)) lie on the Extracellular side of the membrane. Cystine bridges form between C25/C52, C80/C102, and C145/C171. 2 CUB domains span residues 25–139 (CGDN…YEIF) and 145–263 (CSRN…FTVL). N-linked (GlcNAc...) asparagine glycosylation is present at N148. Ca(2+) is bound by residues E193, D207, and D248. C204 and C226 are joined by a disulfide. N-linked (GlcNAc...) asparagine glycosylation is present at N259. Disulfide bonds link C273–C422 and C429–C581. F5/8 type C domains are found at residues 273–422 (CTEP…VYGC) and 429–581 (CSGM…LLGC). N520 carries an N-linked (GlcNAc...) asparagine glycan. A disordered region spans residues 587–624 (TVPPTTPAASTTPSDECDDDQANCHSGTGDGYDQTGGT). S612 carries an O-linked (Xyl...) (chondroitin sulfate) serine; alternate glycan. A glycan (O-linked (Xyl...) (heparan sulfate) serine; alternate) is linked at S612. The MAM domain maps to 642-811 (FACDFGWAND…DNVNMADCKD (170 aa)). A helical membrane pass occupies residues 857 to 877 (ILITIIAMSALGVFLGAICGV). Residues 878-923 (VLYCACSHSGMSDRNLSALENYNFELVDGVKLKKDKLNSQNSYSEA) lie on the Cytoplasmic side of the membrane.

It belongs to the neuropilin family.

It localises to the membrane. In terms of biological role, receptor involved in the development of the cardiovascular system, in angiogenesis, in the formation of certain neuronal circuits and in organogenesis outside the nervous system. It mediates the chemorepulsant activity of semaphorins. Regulates angiogenesis through a VEGF-dependent pathway. This chain is Neuropilin-1a (nrp1a), found in Danio rerio (Zebrafish).